We begin with the raw amino-acid sequence, 186 residues long: Elongation factor P (186 aa).

The protein belongs to the elongation factor P family.

The protein resides in the cytoplasm. Its pathway is protein biosynthesis; polypeptide chain elongation. Functionally, involved in peptide bond synthesis. Stimulates efficient translation and peptide-bond synthesis on native or reconstituted 70S ribosomes in vitro. Probably functions indirectly by altering the affinity of the ribosome for aminoacyl-tRNA, thus increasing their reactivity as acceptors for peptidyl transferase. This chain is Elongation factor P, found in Streptococcus agalactiae serotype Ia (strain ATCC 27591 / A909 / CDC SS700).